A 425-amino-acid chain; its full sequence is Glutamate-1-semialdehyde 2,1-aminomutase (425 aa).

The residue at position 265 (lysine 265) is an N6-(pyridoxal phosphate)lysine.

The protein belongs to the class-III pyridoxal-phosphate-dependent aminotransferase family. HemL subfamily. Homodimer. Requires pyridoxal 5'-phosphate as cofactor.

It localises to the cytoplasm. It carries out the reaction (S)-4-amino-5-oxopentanoate = 5-aminolevulinate. Its pathway is porphyrin-containing compound metabolism; protoporphyrin-IX biosynthesis; 5-aminolevulinate from L-glutamyl-tRNA(Glu): step 2/2. The protein is Glutamate-1-semialdehyde 2,1-aminomutase of Opitutus terrae (strain DSM 11246 / JCM 15787 / PB90-1).